The following is a 219-amino-acid chain: Orotidine 5'-phosphate decarboxylase (219 aa).

Residues Asp10, Lys32, 58–67 (DFKVADIPYT), Ser113, 163–173 (PGIGAQGGDPY), Gly186, and Arg187 each bind substrate. The active-site Proton donor is Lys60.

This sequence belongs to the OMP decarboxylase family. Type 1 subfamily. As to quaternary structure, homodimer.

The enzyme catalyses orotidine 5'-phosphate + H(+) = UMP + CO2. Its pathway is pyrimidine metabolism; UMP biosynthesis via de novo pathway; UMP from orotate: step 2/2. In terms of biological role, catalyzes the decarboxylation of orotidine 5'-monophosphate (OMP) to uridine 5'-monophosphate (UMP). The sequence is that of Orotidine 5'-phosphate decarboxylase from Thermoplasma volcanium (strain ATCC 51530 / DSM 4299 / JCM 9571 / NBRC 15438 / GSS1).